The primary structure comprises 43 residues: Photosystem II reaction center protein Psb30 (43 aa).

Residues 16 to 36 (IAQLTMLAMVLIAGPVVIVLL) traverse the membrane as a helical segment.

It belongs to the Psb30/Ycf12 family. In terms of assembly, PSII is composed of 1 copy each of membrane proteins PsbA, PsbB, PsbC, PsbD, PsbE, PsbF, PsbH, PsbI, PsbJ, PsbK, PsbL, PsbM, PsbT, PsbX, PsbY, PsbZ, Psb30/Ycf12, peripheral proteins PsbO, CyanoQ (PsbQ), PsbU, PsbV and a large number of cofactors. It forms dimeric complexes.

The protein localises to the cellular thylakoid membrane. Its function is as follows. A core subunit of photosystem II (PSII), probably helps stabilize the reaction center. This Trichodesmium erythraeum (strain IMS101) protein is Photosystem II reaction center protein Psb30.